The following is a 343-amino-acid chain: Ribosomal RNA small subunit methyltransferase C (343 aa).

It belongs to the methyltransferase superfamily. RsmC family. As to quaternary structure, monomer.

Its subcellular location is the cytoplasm. It carries out the reaction guanosine(1207) in 16S rRNA + S-adenosyl-L-methionine = N(2)-methylguanosine(1207) in 16S rRNA + S-adenosyl-L-homocysteine + H(+). In terms of biological role, specifically methylates the guanine in position 1207 of 16S rRNA in the 30S particle. This is Ribosomal RNA small subunit methyltransferase C from Shewanella sediminis (strain HAW-EB3).